The primary structure comprises 159 residues: Cytochrome c-type biogenesis protein CcmE (159 aa).

Residues 1–8 lie on the Cytoplasmic side of the membrane; sequence MNIRRKNR. A helical; Signal-anchor for type II membrane protein membrane pass occupies residues 9–29; sequence LWIACAVLAGLALTITLVLYA. The Periplasmic segment spans residues 30–159; that stretch reads LRSNIDLFYT…PESVYKDKAS (130 aa). Positions 130 and 134 each coordinate heme. The segment at 130–159 is disordered; that stretch reads HDENYTPPEVEKAMQENHRRPESVYKDKAS.

Belongs to the CcmE/CycJ family.

It is found in the cell inner membrane. Heme chaperone required for the biogenesis of c-type cytochromes. Transiently binds heme delivered by CcmC and transfers the heme to apo-cytochromes in a process facilitated by CcmF and CcmH. The chain is Cytochrome c-type biogenesis protein CcmE from Citrobacter koseri (strain ATCC BAA-895 / CDC 4225-83 / SGSC4696).